The sequence spans 180 residues: UPF0134 protein MPN_368 (180 aa).

This sequence belongs to the UPF0134 family.

This is UPF0134 protein MPN_368 from Mycoplasma pneumoniae (strain ATCC 29342 / M129 / Subtype 1) (Mycoplasmoides pneumoniae).